The primary structure comprises 651 residues: Intraflagellar transport protein 70A (651 aa).

TPR repeat units lie at residues 8-41, 42-75, 140-173, 175-207, 372-405, 410-443, and 445-478; these read DGEY…QYRS, RAGL…SPEV, PESE…MGYK, DLSF…GIRE, LTEQ…YDET, IPVL…CNEH, and IWKL…HYDN. Residues 494-521 are a coiled coil; the sequence is YIMTSQNEEAEELMRKIEKEEEQIAYEN. One copy of the TPR 8 repeat lies at 530–563; it reads CIVNLVIGTLYCAKGNYEFGISRVIKSLEPYNKK.

The protein belongs to the TTC30/dfy-1/fleer family.

The protein resides in the cell projection. It localises to the cilium. Required for polyglutamylation of axonemal tubulin. Plays a role in anterograde intraflagellar transport (IFT), the process by which cilia precursors are transported from the base of the cilium to the site of their incorporation at the tip. The sequence is that of Intraflagellar transport protein 70A (ift70a) from Xenopus laevis (African clawed frog).